We begin with the raw amino-acid sequence, 784 residues long: SWI/SNF complex subunit SWI3C homolog (784 aa).

The span at 1 to 10 (MPRKASSTSD) shows a compositional bias: polar residues. The tract at residues 1–68 (MPRKASSTSD…PEDADDETLA (68 aa)) is disordered. A compositionally biased stretch (low complexity) spans 24–39 (ASPSPSNRSSAAAAAA). Positions 43-66 (DDSDSAAVNEDDDSAVPEDADDET) are enriched in acidic residues. The region spanning 185-284 (HVVPKHSDWF…YLASGSVHRG (100 aa)) is the SWIRM domain. The ZZ-type; degenerate zinc-finger motif lies at 355–409 (LSESSCSYCLQPLTSLHYQSLKEADIALCSDCFHDARYITGHSSLDFQRIDGDND). Zn(2+) is bound by residues C360, C363, C383, and C386. Positions 413–464 (NDGDSWTDQETLLLLEGIEKYNDNWNNIAEHVGTKSKAQCIYHFIRLPVEDG) constitute an SANT domain. 2 disordered regions span residues 667 to 702 (LASPGNSLPGGSTSTMSSNPMSMSPRPMGVPGSMPQ) and 760 to 784 (GMPNSVTPNHHQLLRSSSGNNSSVG). A compositionally biased stretch (low complexity) spans 675 to 695 (PGGSTSTMSSNPMSMSPRPMG).

As to quaternary structure, interacts with LFR. Interacts with NMCP1.

The protein resides in the nucleus. Its subcellular location is the nucleoplasm. Functionally, component of a multiprotein complex equivalent of the SWI/SNF complex, an ATP-dependent chromatin-remodeling complex, which is required for the positive and negative regulation of gene expression of a large number of genes. It changes chromatin structure by altering DNA-histone contacts within a nucleosome, leading eventually to a change in nucleosome position, thus facilitating or repressing binding of gene-specific transcription factors. May be involved in positive response to drought stress and modulation of root growth through its interaction with NMCP1. The protein is SWI/SNF complex subunit SWI3C homolog of Oryza sativa subsp. japonica (Rice).